We begin with the raw amino-acid sequence, 803 residues long: Subtilisin-like protease SBT5.5 (803 aa).

The signal sequence occupies residues 1–22 (MKRIFGIFIFLSLLLFLVPLLA). Residues 23-112 (SCTKEKQVYI…KSDPRKYKIH (90 aa)) constitute a propeptide, activation peptide. The region spanning 30–108 (VYIVYFGEHK…VSVFKSDPRK (79 aa)) is the Inhibitor I9 domain. The region spanning 140 to 656 (KYDVNDRFRV…SRHFRPTKAA (517 aa)) is the Peptidase S8 domain. D169 serves as the catalytic Charge relay system. N-linked (GlcNAc...) asparagine glycosylation occurs at N202. The active-site Charge relay system is the H244. The PA domain maps to 409–504 (YAPLVYAPDV…VFSSTVDRIL (96 aa)). Residue S589 is the Charge relay system of the active site. Residue N725 is glycosylated (N-linked (GlcNAc...) asparagine).

It belongs to the peptidase S8 family.

Its subcellular location is the secreted. The polypeptide is Subtilisin-like protease SBT5.5 (Arabidopsis thaliana (Mouse-ear cress)).